Consider the following 384-residue polypeptide: Cell division protein FtsZ (384 aa).

GTP is bound by residues 20-24 (GGGGN), 107-109 (GTG), Glu-138, Arg-142, and Asn-186.

This sequence belongs to the FtsZ family. Homodimer. Polymerizes to form a dynamic ring structure in a strictly GTP-dependent manner. Interacts directly with several other division proteins.

Its subcellular location is the cytoplasm. In terms of biological role, essential cell division protein that forms a contractile ring structure (Z ring) at the future cell division site. The regulation of the ring assembly controls the timing and the location of cell division. One of the functions of the FtsZ ring is to recruit other cell division proteins to the septum to produce a new cell wall between the dividing cells. Binds GTP and shows GTPase activity. The chain is Cell division protein FtsZ from Buchnera aphidicola subsp. Schizaphis graminum (strain Sg).